A 416-amino-acid polypeptide reads, in one-letter code: MSLVAIGINHKTATVDLREKVAFSPDKIHDAMKSLASRTKTGEAVIISTCNRTELYTNTGDEAEVIRWLEEYHQLSHEDVEPCLYKFEGQAVAQHLMRVSSGLDSLILGEPQILGQVKQSFVKAKEAGSVAITMDRLFQNTFSVAKKIRTETEIGAAAVSVAFAAVSMAKHIFSSLSTTKVLLVGAGETIELVARHLKDNGVDSMVVANRTLSRAEGMCEEFGATAITLEQIPDYLPQADIVISSTASPLPILGKGMVEKALKQRRHQPMLLVDIAVPRDIEAEVAELDDAFLYTVDDLQSIIEQNMASRREAAEQAEVIAEEQSHLFMEWVRSLESVDSIREYRTASMAIKDELVERAINKLAQGGDSEKLLLELANKLTNKLIHAPTQALTVASRQGDLNSIGQLRTALGLDKN.

Residues 49-52 (TCNR), Ser105, 110-112 (EPQ), and Gln116 contribute to the substrate site. The Nucleophile role is filled by Cys50. 185-190 (GAGETI) serves as a coordination point for NADP(+).

Belongs to the glutamyl-tRNA reductase family. In terms of assembly, homodimer.

The enzyme catalyses (S)-4-amino-5-oxopentanoate + tRNA(Glu) + NADP(+) = L-glutamyl-tRNA(Glu) + NADPH + H(+). The protein operates within porphyrin-containing compound metabolism; protoporphyrin-IX biosynthesis; 5-aminolevulinate from L-glutamyl-tRNA(Glu): step 1/2. In terms of biological role, catalyzes the NADPH-dependent reduction of glutamyl-tRNA(Glu) to glutamate 1-semialdehyde (GSA). In Shewanella sediminis (strain HAW-EB3), this protein is Glutamyl-tRNA reductase.